The sequence spans 347 residues: MKPPILFTILLTVISGTMIVLMSSHWLMIWIGFEMNTLAIIPILMKKSNPRAIEASTKYFLTQATASMILMMGITINLMYSGQWTMSKTLCPMASTMMTIALAMKLGLAPFHFWVPEVTQGVHMSSGLILLTWQKIAPLLVLYQISPTIDPNLLLPMAMMSVLIGGWGGLNQTQLRKILAYSSIAHMGWMATITLYNPTMMLLNLTIYIIMTLTTFMLFMHNSTTTTLSLSQTWNKTPLVTSLILMLMLSLGGLPPLSGFIPKWMIIQELTKNEMIIMPTLLAITALLNLYFYMRLTYTTTLTMFPSTNNMKMKWKFDNTKKMILLPPLTVISTMLLPITPLLSILD.

11 consecutive transmembrane segments (helical) span residues 3 to 23 (PPILFTILLTVISGTMIVLMS), 25 to 45 (HWLMIWIGFEMNTLAIIPILM), 59 to 79 (YFLTQATASMILMMGITINLM), 96 to 116 (TMMTIALAMKLGLAPFHFWVP), 122 to 142 (VHMSSGLILLTWQKIAPLLVL), 149 to 169 (IDPNLLLPMAMMSVLIGGWGG), 178 to 198 (ILAYSSIAHMGWMATITLYNP), 200 to 220 (MMLLNLTIYIIMTLTTFMLFM), 242 to 262 (SLILMLMLSLGGLPPLSGFIP), 274 to 294 (EMIIMPTLLAITALLNLYFYM), and 323 to 343 (MILLPPLTVISTMLLPITPLL).

The protein belongs to the complex I subunit 2 family. Core subunit of respiratory chain NADH dehydrogenase (Complex I) which is composed of 45 different subunits. Interacts with TMEM242.

The protein resides in the mitochondrion inner membrane. It catalyses the reaction a ubiquinone + NADH + 5 H(+)(in) = a ubiquinol + NAD(+) + 4 H(+)(out). Its function is as follows. Core subunit of the mitochondrial membrane respiratory chain NADH dehydrogenase (Complex I) that is believed to belong to the minimal assembly required for catalysis. Complex I functions in the transfer of electrons from NADH to the respiratory chain. The immediate electron acceptor for the enzyme is believed to be ubiquinone. This Suricata suricatta (Meerkat) protein is NADH-ubiquinone oxidoreductase chain 2.